We begin with the raw amino-acid sequence, 276 residues long: Mitochondrial outer membrane protein porin of 36 kDa (276 aa).

Belongs to the eukaryotic mitochondrial porin (TC 1.B.8.1) family.

It localises to the mitochondrion outer membrane. In terms of biological role, forms a channel through the cell membrane that allows diffusion of small hydrophilic molecules. The channel adopts an open conformation at low or zero membrane potential and a closed conformation at potentials above 30-40 mV. The open state has a weak anion selectivity whereas the closed state is cation-selective. The chain is Mitochondrial outer membrane protein porin of 36 kDa from Solanum tuberosum (Potato).